The sequence spans 206 residues: Methylthioribulose-1-phosphate dehydratase (206 aa).

Zn(2+) contacts are provided by His96 and His98.

It belongs to the aldolase class II family. MtnB subfamily. Zn(2+) serves as cofactor.

The enzyme catalyses 5-(methylsulfanyl)-D-ribulose 1-phosphate = 5-methylsulfanyl-2,3-dioxopentyl phosphate + H2O. It participates in amino-acid biosynthesis; L-methionine biosynthesis via salvage pathway; L-methionine from S-methyl-5-thio-alpha-D-ribose 1-phosphate: step 2/6. Functionally, catalyzes the dehydration of methylthioribulose-1-phosphate (MTRu-1-P) into 2,3-diketo-5-methylthiopentyl-1-phosphate (DK-MTP-1-P). The sequence is that of Methylthioribulose-1-phosphate dehydratase from Exiguobacterium sibiricum (strain DSM 17290 / CCUG 55495 / CIP 109462 / JCM 13490 / 255-15).